The chain runs to 312 residues: Polyamine aminopropyltransferase (312 aa).

In terms of domain architecture, PABS spans 7–247; that stretch reads FFWVQEYFTP…GPLGFALAAQ (241 aa). Glutamine 36 lines the S-methyl-5'-thioadenosine pocket. Histidine 67 and glutamate 95 together coordinate spermidine. S-methyl-5'-thioadenosine contacts are provided by residues aspartate 115 and 147–148; that span reads DA. The active-site Proton acceptor is aspartate 165. An S-methyl-5'-thioadenosine-binding site is contributed by proline 174.

Belongs to the spermidine/spermine synthase family. Homodimer or homotetramer.

The protein localises to the cytoplasm. It catalyses the reaction S-adenosyl 3-(methylsulfanyl)propylamine + putrescine = S-methyl-5'-thioadenosine + spermidine + H(+). It participates in amine and polyamine biosynthesis; spermidine biosynthesis; spermidine from putrescine: step 1/1. In terms of biological role, catalyzes the irreversible transfer of a propylamine group from the amino donor S-adenosylmethioninamine (decarboxy-AdoMet) to putrescine (1,4-diaminobutane) to yield spermidine. The polypeptide is Polyamine aminopropyltransferase (Synechococcus sp. (strain JA-2-3B'a(2-13)) (Cyanobacteria bacterium Yellowstone B-Prime)).